The sequence spans 217 residues: FMN-dependent NADH:quinone oxidoreductase (217 aa).

Residues Ser-10, 17-19 (SAS), and 137-140 (SRGG) contribute to the FMN site.

This sequence belongs to the azoreductase type 1 family. In terms of assembly, homodimer. It depends on FMN as a cofactor.

It catalyses the reaction 2 a quinone + NADH + H(+) = 2 a 1,4-benzosemiquinone + NAD(+). The catalysed reaction is N,N-dimethyl-1,4-phenylenediamine + anthranilate + 2 NAD(+) = 2-(4-dimethylaminophenyl)diazenylbenzoate + 2 NADH + 2 H(+). Quinone reductase that provides resistance to thiol-specific stress caused by electrophilic quinones. Functionally, also exhibits azoreductase activity. Catalyzes the reductive cleavage of the azo bond in aromatic azo compounds to the corresponding amines. In Streptomyces avermitilis (strain ATCC 31267 / DSM 46492 / JCM 5070 / NBRC 14893 / NCIMB 12804 / NRRL 8165 / MA-4680), this protein is FMN-dependent NADH:quinone oxidoreductase.